The chain runs to 200 residues: Recombination protein RecR (200 aa).

The C4-type zinc-finger motif lies at 58 to 75 (CSNCFCLKISQTSPCNFC). Residues 82–177 (SSLCIVATPK…KISRLALGMP (96 aa)) enclose the Toprim domain.

The protein belongs to the RecR family.

In terms of biological role, may play a role in DNA repair. It seems to be involved in an RecBC-independent recombinational process of DNA repair. It may act with RecF and RecO. This is Recombination protein RecR from Chlamydia trachomatis serovar D (strain ATCC VR-885 / DSM 19411 / UW-3/Cx).